The primary structure comprises 310 residues: Nodulation protein D 1 (310 aa).

The 58-residue stretch at 6 to 63 (LDLNLLVALDALMTERQLTAAARRINLSQPAMSAAIARLRNYFHDDLFVMQGRELILT) folds into the HTH lysR-type domain. A DNA-binding region (H-T-H motif) is located at residues 23-42 (LTAAARRINLSQPAMSAAIA).

It belongs to the LysR transcriptional regulatory family.

In terms of biological role, nodD regulates the expression of the nodABCFE genes which encode other nodulation proteins. NodD is also a negative regulator of its own expression. Binds flavonoids as inducers. This Neorhizobium galegae (Rhizobium galegae) protein is Nodulation protein D 1 (nodD1).